Reading from the N-terminus, the 150-residue chain is Macrodomain Ter protein (150 aa).

Belongs to the MatP family. As to quaternary structure, homodimer.

It is found in the cytoplasm. Its function is as follows. Required for spatial organization of the terminus region of the chromosome (Ter macrodomain) during the cell cycle. Prevents early segregation of duplicated Ter macrodomains during cell division. Binds specifically to matS, which is a 13 bp signature motif repeated within the Ter macrodomain. This Shigella dysenteriae serotype 1 (strain Sd197) protein is Macrodomain Ter protein.